The primary structure comprises 249 residues: ATP synthase subunit a, chloroplastic (249 aa).

The next 5 helical transmembrane spans lie at 40 to 60 (QVLI…VIAI), 97 to 117 (VPFI…GALL), 136 to 156 (INTT…AGLS), 201 to 221 (LVVV…VMFL), and 222 to 242 (GLFT…AYIG).

It belongs to the ATPase A chain family. F-type ATPases have 2 components, CF(1) - the catalytic core - and CF(0) - the membrane proton channel. CF(1) has five subunits: alpha(3), beta(3), gamma(1), delta(1), epsilon(1). CF(0) has four main subunits: a, b, b' and c.

The protein resides in the plastid. It is found in the chloroplast thylakoid membrane. Its function is as follows. Key component of the proton channel; it plays a direct role in the translocation of protons across the membrane. The polypeptide is ATP synthase subunit a, chloroplastic (Barbarea verna (Land cress)).